Consider the following 517-residue polypeptide: Phospholipase C C (517 aa).

The tat-type signal signal peptide spans 1–39 (MVSQGAFAGMSRRAFLAKAAGAGAAAVLTDWAAPVIEKA).

Belongs to the bacterial phospholipase C family. Post-translationally, predicted to be exported by the Tat system. The position of the signal peptide cleavage has not been experimentally proven.

It is found in the secreted. It localises to the cell wall. The catalysed reaction is a 1,2-diacyl-sn-glycero-3-phosphocholine + H2O = phosphocholine + a 1,2-diacyl-sn-glycerol + H(+). The enzyme catalyses 1,2-dihexadecanoyl-sn-glycero-3-phosphocholine + H2O = 1,2-dihexadecanoyl-sn-glycerol + phosphocholine + H(+). In terms of biological role, involved in virulence. Induces cytotoxic effects on mouse macrophage cell lines, via direct or indirect enzymatic hydrolysis of cell membrane phospholipids. Hydrolyzes phosphatidylcholine. Does not have hemolytic activity. In Mycobacterium tuberculosis (strain ATCC 25618 / H37Rv), this protein is Phospholipase C C.